The sequence spans 291 residues: 3-hydroxy-5-phosphonooxypentane-2,4-dione thiolase (291 aa).

The active-site Schiff-base intermediate with substrate is the Lys203.

The protein belongs to the DeoC/FbaB aldolase family. As to quaternary structure, homodecamer.

It is found in the cytoplasm. The catalysed reaction is dihydroxyacetone phosphate + acetyl-CoA = 3-hydroxy-2,4-dioxopentyl phosphate + CoA. Involved in the degradation of phospho-AI-2, thereby terminating induction of the lsr operon and closing the AI-2 signaling cycle. Catalyzes the transfer of an acetyl moiety from 3-hydroxy-5-phosphonooxypentane-2,4-dione to CoA to form glycerone phosphate and acetyl-CoA. The protein is 3-hydroxy-5-phosphonooxypentane-2,4-dione thiolase of Yersinia pseudotuberculosis serotype O:1b (strain IP 31758).